We begin with the raw amino-acid sequence, 329 residues long: Cytosolic arginine sensor for mTORC1 subunit 2 (329 aa).

ACT domains lie at 72-139 (ADAT…MHTL) and 262-322 (ELWK…NALQ).

This sequence belongs to the GATS family. In terms of assembly, may form homodimers and heterodimers.

The protein localises to the cytoplasm. It localises to the cytosol. Functions as a negative regulator of the TORC1 signaling pathway. The sequence is that of Cytosolic arginine sensor for mTORC1 subunit 2 from Xenopus tropicalis (Western clawed frog).